A 504-amino-acid chain; its full sequence is MFGEKFRDRQKPMVLVLGLGESGLAMARWCARHGCRLRAADTREVPPNLSALEAHGVDAQFVGGPFSPVLLEGVELVAISPGLSPLAADLLPLIAAAREQGIPVWGELEFFSQALKTLGESGYAPKVIAITGTNGKTTTTSLTGLLCERAGRKVAVAGNISPALLDKLSEAIDNTALPDVWVLELSSFQLETAHTFSPDAAVVLNITQDHLDWHGGLDAYAAAKGRIFGTQTVRVLNRDDSRVMKLAPSEDSEAGMVTFGVTEPKNEGDYGLLRDNGMIWLVEAHDRDASDEPAPKRRRKNEVATPPNIALKRLMPADALRIRGLHNAANALAAYALARAIGLPGASLLHGLREYRGEPHRVELIASIDGIDYVDDSKGTNVGATVAALDGLAQRVVLIAGGDGKGQDFEPLAAPVMRWCRAVMLIGRDAPQIRAALEDTGIAMTDHATLEEATRAAAALAQPGDAVLLSPACASFDMFKGYAHRAAVFRGTVEEIAAERGTMI.

132-138 (GTNGKTT) is an ATP binding site. Positions 286–295 (DRDASDEPAP) are enriched in basic and acidic residues. A disordered region spans residues 286–305 (DRDASDEPAPKRRRKNEVAT).

It belongs to the MurCDEF family.

The protein localises to the cytoplasm. The enzyme catalyses UDP-N-acetyl-alpha-D-muramoyl-L-alanine + D-glutamate + ATP = UDP-N-acetyl-alpha-D-muramoyl-L-alanyl-D-glutamate + ADP + phosphate + H(+). The protein operates within cell wall biogenesis; peptidoglycan biosynthesis. Its function is as follows. Cell wall formation. Catalyzes the addition of glutamate to the nucleotide precursor UDP-N-acetylmuramoyl-L-alanine (UMA). In Paraburkholderia xenovorans (strain LB400), this protein is UDP-N-acetylmuramoylalanine--D-glutamate ligase.